Here is a 137-residue protein sequence, read N- to C-terminus: Small ribosomal subunit protein uS12 (137 aa).

Positions 1–20 are disordered; sequence MPTTNQLVNRGRTSKVQKQN. Aspartate 102 is modified (3-methylthioaspartic acid).

It belongs to the universal ribosomal protein uS12 family. In terms of assembly, part of the 30S ribosomal subunit. Contacts proteins S8 and S17. May interact with IF1 in the 30S initiation complex.

Its function is as follows. With S4 and S5 plays an important role in translational accuracy. Functionally, interacts with and stabilizes bases of the 16S rRNA that are involved in tRNA selection in the A site and with the mRNA backbone. Located at the interface of the 30S and 50S subunits, it traverses the body of the 30S subunit contacting proteins on the other side and probably holding the rRNA structure together. The combined cluster of proteins S8, S12 and S17 appears to hold together the shoulder and platform of the 30S subunit. The polypeptide is Small ribosomal subunit protein uS12 (Mycoplasmopsis synoviae (strain 53) (Mycoplasma synoviae)).